A 599-amino-acid polypeptide reads, in one-letter code: Elongation factor 4 (599 aa).

A tr-type G domain is found at 5-187 (SHIRNFSIVA…SIVQNLPAPK (183 aa)). Residues 17–22 (DHGKST) and 134–137 (NKID) each bind GTP.

This sequence belongs to the TRAFAC class translation factor GTPase superfamily. Classic translation factor GTPase family. LepA subfamily.

Its subcellular location is the cell inner membrane. The enzyme catalyses GTP + H2O = GDP + phosphate + H(+). Required for accurate and efficient protein synthesis under certain stress conditions. May act as a fidelity factor of the translation reaction, by catalyzing a one-codon backward translocation of tRNAs on improperly translocated ribosomes. Back-translocation proceeds from a post-translocation (POST) complex to a pre-translocation (PRE) complex, thus giving elongation factor G a second chance to translocate the tRNAs correctly. Binds to ribosomes in a GTP-dependent manner. The protein is Elongation factor 4 of Roseobacter denitrificans (strain ATCC 33942 / OCh 114) (Erythrobacter sp. (strain OCh 114)).